We begin with the raw amino-acid sequence, 320 residues long: TATA box-binding protein-like 2 (320 aa).

It belongs to the TBP family. As to expression, expression is restricted to the gonads, and is higher in the ovary than the testis.

It is found in the nucleus. TATA box-binding transcription factor. Members of the TBP family are differentially required to regulate transcription and development during early embryogenesis. Required for gastrulation. Regulates a large subset of genes that are ventrally expressed. Binds to a subset of promoters. The protein is TATA box-binding protein-like 2 of Xenopus laevis (African clawed frog).